Reading from the N-terminus, the 228-residue chain is Histidine/lysine/arginine/ornithine transport system permease protein HisQ (228 aa).

The Periplasmic segment spans residues 1–12 (MLYGFSGVILQG). Residues 13-33 (AIVTLELALSSVVLAVLIGLV) traverse the membrane as a helical segment. The ABC transmembrane type-1 domain maps to 13–212 (AIVTLELALS…VFTTVSNGVL (200 aa)). Residues 34–58 (GAGAKLSQNRVTGLIFEGYTTLIRG) are Cytoplasmic-facing. Residues 59 to 79 (VPDLVLMLLIFYGLQIALNVV) traverse the membrane as a helical segment. Over 80 to 87 (TDSLGIDQ) the chain is Periplasmic. The chain crosses the membrane as a helical span at residues 88–108 (IDIDPMVAGIITLGFIYGAYF). Over 109–152 (TETFRGAFMAVPKGHIEAATAFGFTHGQTFRRIMFPAMMRYALP) the chain is Cytoplasmic. A helical membrane pass occupies residues 153-173 (GIGNNWQVILKATALVSLLGL). The Periplasmic portion of the chain corresponds to 174–194 (EDVVKATQLAGKSTWEPFYFA). The helical transmembrane segment at 195 to 215 (VVCGLIYLVFTTVSNGVLLLL) threads the bilayer. The Cytoplasmic portion of the chain corresponds to 216–228 (ERRYSVGVKRADL).

Belongs to the binding-protein-dependent transport system permease family. HisMQ subfamily. As to quaternary structure, the HisPMQJ complex is composed of two ATP-binding proteins (HisP), two transmembrane proteins (HisM and HisQ) and a solute-binding protein (HisJ). The HisPMQ-ArgT complex is composed of two ATP-binding proteins (HisP), two transmembrane proteins (HisM and HisQ) and a solute-binding protein (ArgT).

It is found in the cell inner membrane. Its function is as follows. Part of the ABC transporter complex HisPMQJ involved in histidine transport. Is also part of the ABC transporter complex HisPMQ-ArgT involved in lysine/arginine/ornithine transport. Probably responsible for the translocation of the substrate across the membrane. This Salmonella typhi protein is Histidine/lysine/arginine/ornithine transport system permease protein HisQ (hisQ).